The sequence spans 362 residues: Ferrochelatase (362 aa).

Fe cation contacts are provided by histidine 212 and glutamate 294.

It belongs to the ferrochelatase family.

It is found in the cytoplasm. The catalysed reaction is heme b + 2 H(+) = protoporphyrin IX + Fe(2+). Its pathway is porphyrin-containing compound metabolism; protoheme biosynthesis; protoheme from protoporphyrin-IX: step 1/1. In terms of biological role, catalyzes the ferrous insertion into protoporphyrin IX. This Leptospira biflexa serovar Patoc (strain Patoc 1 / Ames) protein is Ferrochelatase.